A 338-amino-acid chain; its full sequence is Tryptophan--tRNA ligase (338 aa).

ATP-binding positions include 11–13 (QPS) and 19–20 (GN). The 'HIGH' region motif lies at 12–20 (PSGELSIGN). Asp135 contributes to the L-tryptophan binding site. Residues 147–149 (GSD), Val189, and 198–202 (KMSKS) contribute to the ATP site. The 'KMSKS' region signature appears at 198–202 (KMSKS).

The protein belongs to the class-I aminoacyl-tRNA synthetase family. In terms of assembly, homodimer.

It is found in the cytoplasm. It catalyses the reaction tRNA(Trp) + L-tryptophan + ATP = L-tryptophyl-tRNA(Trp) + AMP + diphosphate + H(+). In terms of biological role, catalyzes the attachment of tryptophan to tRNA(Trp). The polypeptide is Tryptophan--tRNA ligase (Vibrio vulnificus (strain CMCP6)).